The sequence spans 259 residues: 7-cyano-7-deazaguanine synthase (259 aa).

32–42 (LSGGLDSVTCL) lines the ATP pocket. Positions 223, 233, 236, and 239 each coordinate Zn(2+).

This sequence belongs to the QueC family. The cofactor is Zn(2+).

The enzyme catalyses 7-carboxy-7-deazaguanine + NH4(+) + ATP = 7-cyano-7-deazaguanine + ADP + phosphate + H2O + H(+). It functions in the pathway purine metabolism; 7-cyano-7-deazaguanine biosynthesis. Its function is as follows. Catalyzes the ATP-dependent conversion of 7-carboxy-7-deazaguanine (CDG) to 7-cyano-7-deazaguanine (preQ(0)). The chain is 7-cyano-7-deazaguanine synthase from Psychrobacter arcticus (strain DSM 17307 / VKM B-2377 / 273-4).